A 700-amino-acid chain; its full sequence is Dipeptidyl aminopeptidase 1 (700 aa).

Residues 1-27 (MAKRIFSVSFLLVLLNVLHICIKFSVA) form the signal peptide. N-linked (GlcNAc...) asparagine glycosylation is found at Asn52, Asn144, Asn265, Asn337, and Asn373. The propeptide occupies 210 to 369 (DNVNEIKHLD…SPKRELEINE (160 aa)). Disulfide bonds link Cys395/Cys446 and Cys439/Cys478. Cys398 is a catalytic residue. Thr416 bears the Sulfothreonine mark. Chloride is bound by residues Phe450 and Tyr452. N-linked (GlcNAc...) asparagine glycosylation is found at Asn481, Asn490, and Asn507. Chloride is bound at residue Tyr549. An N-linked (GlcNAc...) asparagine glycan is attached at Asn615. Catalysis depends on residues His624 and Asn648. Asn667 carries N-linked (GlcNAc...) asparagine glycosylation.

It belongs to the peptidase C1 family. Monomer. It depends on chloride as a cofactor.

Its subcellular location is the vacuole lumen. It is found in the parasitophorous vacuole lumen. The catalysed reaction is Release of an N-terminal dipeptide, Xaa-Yaa-|-Zaa-, except when Xaa is Arg or Lys, or Yaa or Zaa is Pro.. Functionally, thiol protease that cleaves dipeptides from the N-terminus of protein substrates. Active against a broad range of dipeptide substrates composed of both polar and hydrophobic amino acids. Proline cannot occupy the P1 position and arginine or lysine cannot occupy the P2 position of the substrate. Involved in host hemoglobin degradation by generating dipeptides from hemoglobin-derived oligopeptides. This is Dipeptidyl aminopeptidase 1 from Plasmodium falciparum (isolate 3D7).